The primary structure comprises 96 residues: Antitoxin ParD4 (96 aa).

Belongs to the ParD antitoxin family.

Antitoxin component of a type II toxin-antitoxin (TA) system. Neutralizes the effect of cognate toxin ParE4, but no other RelE or ParE toxin. The protein is Antitoxin ParD4 (parD4) of Caulobacter vibrioides (strain ATCC 19089 / CIP 103742 / CB 15) (Caulobacter crescentus).